Here is a 1493-residue protein sequence, read N- to C-terminus: Pleckstrin homology domain-containing family H member 2 (1493 aa).

Residues 20-175 (LESQLMKFRV…LQEVQGKKSS (156 aa)) are a coiled coil. 4 disordered regions span residues 202 to 230 (SPPQVVKSEEMSKISSKEPEFTEGKDMEE), 245 to 335 (NNRG…SSSI), 363 to 439 (LNSP…LPPP), and 613 to 705 (SSSP…EPLE). Basic and acidic residues predominate over residues 208–230 (KSEEMSKISSKEPEFTEGKDMEE). Polar residues-rich tracts occupy residues 245 to 260 (NNRGQRTLHQTPCGSE) and 267 to 281 (TSFATDGGISQNSGA). Over residues 374-388 (LSKKEQDSSSDELNK) the composition is skewed to basic and acidic residues. Polar residues-rich tracts occupy residues 389 to 409 (KFQSQRLDYSSSSSEANTPSP), 421 to 432 (NSLSGKGTQLVP), and 676 to 698 (STDTEYSQPEQKLPKTCSSSSDN). PH domains lie at 703–797 (PLEK…NVLR) and 811–919 (KPTM…VAAG). The MyTH4 domain occupies 955 to 1110 (HSKEGIISPL…PSRMEILSTL (156 aa)). The 331-residue stretch at 1121-1451 (FSIPVHFMNG…SYINNFHQQK (331 aa)) folds into the FERM domain. A disordered region spans residues 1474–1493 (MMGSQPLLSSSRPTKGPTLL).

In terms of assembly, self-associates. Interacts with TGFB1I1. In terms of tissue distribution, kidney. Reduced expression in patients with focal segmental glomerulosclerosis.

Its subcellular location is the cytoplasm. The protein localises to the cytoskeleton. It localises to the cell membrane. It is found in the cell projection. The protein resides in the lamellipodium. Functionally, in the kidney glomerulus may play a role in linking podocyte foot processes to the glomerular basement membrane. May be involved in stabilization of F-actin by attenuating its depolymerization. Can recruit TGFB1I1 from focal adhesions to podocyte lamellipodia. This is Pleckstrin homology domain-containing family H member 2 (PLEKHH2) from Homo sapiens (Human).